A 210-amino-acid polypeptide reads, in one-letter code: Holliday junction branch migration complex subunit RuvA (210 aa).

Residues 1-70 are domain I; it reads MISYLKGNPI…DEQPILYGFA (70 aa). The interval 71 to 149 is domain II; it reads TAAERELFRQ…QWRKLVGITL (79 aa). Positions 150–160 are flexible linker; sequence PSTSAIPSLEV. The domain III stretch occupies residues 160 to 210; it reads VLEDVEMTLLALGYTNEEINKAISTLSQDNQMLKNTNSEEWIREAIAWLSQ.

This sequence belongs to the RuvA family. In terms of assembly, homotetramer. Forms an RuvA(8)-RuvB(12)-Holliday junction (HJ) complex. HJ DNA is sandwiched between 2 RuvA tetramers; dsDNA enters through RuvA and exits via RuvB. An RuvB hexamer assembles on each DNA strand where it exits the tetramer. Each RuvB hexamer is contacted by two RuvA subunits (via domain III) on 2 adjacent RuvB subunits; this complex drives branch migration. In the full resolvosome a probable DNA-RuvA(4)-RuvB(12)-RuvC(2) complex forms which resolves the HJ.

The protein localises to the cytoplasm. Functionally, the RuvA-RuvB-RuvC complex processes Holliday junction (HJ) DNA during genetic recombination and DNA repair, while the RuvA-RuvB complex plays an important role in the rescue of blocked DNA replication forks via replication fork reversal (RFR). RuvA specifically binds to HJ cruciform DNA, conferring on it an open structure. The RuvB hexamer acts as an ATP-dependent pump, pulling dsDNA into and through the RuvAB complex. HJ branch migration allows RuvC to scan DNA until it finds its consensus sequence, where it cleaves and resolves the cruciform DNA. This Rippkaea orientalis (strain PCC 8801 / RF-1) (Cyanothece sp. (strain PCC 8801)) protein is Holliday junction branch migration complex subunit RuvA.